The sequence spans 564 residues: Glutamyl-tRNA(Gln) amidotransferase subunit B, mitochondrial (564 aa).

The transit peptide at 1-88 (MIRQCVSHRG…DTDAKLFSRA (88 aa)) directs the protein to the mitochondrion. The disordered stretch occupies residues 26–63 (PFHHPSPRPLGRKNWSTSDEAKSKRAAMRKGGAPPPEH).

This sequence belongs to the GatB/GatE family. GatB subfamily. In terms of assembly, subunit of the heterotrimeric GatCAB amidotransferase (AdT) complex, composed of A, B and C subunits.

It is found in the mitochondrion. It catalyses the reaction L-glutamyl-tRNA(Gln) + L-glutamine + ATP + H2O = L-glutaminyl-tRNA(Gln) + L-glutamate + ADP + phosphate + H(+). In terms of biological role, allows the formation of correctly charged Gln-tRNA(Gln) through the transamidation of misacylated Glu-tRNA(Gln) in the mitochondria. The reaction takes place in the presence of glutamine and ATP through an activated gamma-phospho-Glu-tRNA(Gln). The chain is Glutamyl-tRNA(Gln) amidotransferase subunit B, mitochondrial from Ajellomyces capsulatus (strain G186AR / H82 / ATCC MYA-2454 / RMSCC 2432) (Darling's disease fungus).